The following is a 635-amino-acid chain: Threonine--tRNA ligase (635 aa).

Positions 1 to 61 (MISIRLKDGS…KEDGCLELLD (61 aa)) constitute a TGS domain. Positions 242–532 (DHRRLGRELG…LTEHFGGAFP (291 aa)) are catalytic. Cysteine 333, histidine 384, and histidine 509 together coordinate Zn(2+).

This sequence belongs to the class-II aminoacyl-tRNA synthetase family. Homodimer. The cofactor is Zn(2+).

The protein resides in the cytoplasm. It catalyses the reaction tRNA(Thr) + L-threonine + ATP = L-threonyl-tRNA(Thr) + AMP + diphosphate + H(+). In terms of biological role, catalyzes the attachment of threonine to tRNA(Thr) in a two-step reaction: L-threonine is first activated by ATP to form Thr-AMP and then transferred to the acceptor end of tRNA(Thr). Also edits incorrectly charged L-seryl-tRNA(Thr). The chain is Threonine--tRNA ligase from Syntrophomonas wolfei subsp. wolfei (strain DSM 2245B / Goettingen).